The following is a 281-amino-acid chain: Pantothenate synthetase (281 aa).

30 to 37 (MGALHRGH) lines the ATP pocket. Residue histidine 37 is the Proton donor of the active site. Glutamine 61 lines the (R)-pantoate pocket. Glutamine 61 serves as a coordination point for beta-alanine. Residue 147-150 (GEKD) coordinates ATP. Residue glutamine 153 coordinates (R)-pantoate. ATP-binding positions include isoleucine 176 and 184–187 (LSSR).

Belongs to the pantothenate synthetase family. Homodimer.

It is found in the cytoplasm. It catalyses the reaction (R)-pantoate + beta-alanine + ATP = (R)-pantothenate + AMP + diphosphate + H(+). It functions in the pathway cofactor biosynthesis; (R)-pantothenate biosynthesis; (R)-pantothenate from (R)-pantoate and beta-alanine: step 1/1. Its function is as follows. Catalyzes the condensation of pantoate with beta-alanine in an ATP-dependent reaction via a pantoyl-adenylate intermediate. This is Pantothenate synthetase from Porphyromonas gingivalis (strain ATCC 33277 / DSM 20709 / CIP 103683 / JCM 12257 / NCTC 11834 / 2561).